A 58-amino-acid chain; its full sequence is Large ribosomal subunit protein uL30 (58 aa).

This sequence belongs to the universal ribosomal protein uL30 family. Part of the 50S ribosomal subunit.

The polypeptide is Large ribosomal subunit protein uL30 (Porphyromonas gingivalis (strain ATCC 33277 / DSM 20709 / CIP 103683 / JCM 12257 / NCTC 11834 / 2561)).